We begin with the raw amino-acid sequence, 706 residues long: Fatty acid oxidation complex subunit alpha (706 aa).

The interval 1–188 is enoyl-CoA hydratase; sequence MEKTFNLTRR…KMGLVNDVVP (188 aa). The 3-hydroxyacyl-CoA dehydrogenase stretch occupies residues 308–706; the sequence is RKVKKAVILG…TMARENVSFF (399 aa).

The protein in the N-terminal section; belongs to the enoyl-CoA hydratase/isomerase family. This sequence in the central section; belongs to the 3-hydroxyacyl-CoA dehydrogenase family. As to quaternary structure, heterotetramer of two alpha chains (FadJ) and two beta chains (FadI).

It localises to the cytoplasm. It catalyses the reaction a (3S)-3-hydroxyacyl-CoA = a (2E)-enoyl-CoA + H2O. It carries out the reaction a 4-saturated-(3S)-3-hydroxyacyl-CoA = a (3E)-enoyl-CoA + H2O. The catalysed reaction is a (3S)-3-hydroxyacyl-CoA + NAD(+) = a 3-oxoacyl-CoA + NADH + H(+). The enzyme catalyses (3S)-3-hydroxybutanoyl-CoA = (3R)-3-hydroxybutanoyl-CoA. It functions in the pathway lipid metabolism; fatty acid beta-oxidation. In terms of biological role, catalyzes the formation of a hydroxyacyl-CoA by addition of water on enoyl-CoA. Also exhibits 3-hydroxyacyl-CoA epimerase and 3-hydroxyacyl-CoA dehydrogenase activities. In Shewanella putrefaciens (strain CN-32 / ATCC BAA-453), this protein is Fatty acid oxidation complex subunit alpha.